The chain runs to 523 residues: NADP-specific glutamate dehydrogenase (523 aa).

The interval 26-50 (CARGRSAKRDVAAKRLRSRSPRMDA) is disordered. Lysine 202 is a catalytic residue.

It belongs to the Glu/Leu/Phe/Val dehydrogenases family. Homo- and heterohexamer of alpha and beta subunits. Both subunits are encoded by the same gene. In terms of processing, the N-termini of the alpha and the beta chains are blocked.

The protein resides in the plastid. Its subcellular location is the chloroplast. It carries out the reaction L-glutamate + NADP(+) + H2O = 2-oxoglutarate + NH4(+) + NADPH + H(+). This Chlorella sorokiniana (Freshwater green alga) protein is NADP-specific glutamate dehydrogenase.